The chain runs to 434 residues: 3-phosphoshikimate 1-carboxyvinyltransferase (434 aa).

3-phosphoshikimate is bound by residues Lys-22, Ser-23, and Arg-27. Lys-22 provides a ligand contact to phosphoenolpyruvate. Phosphoenolpyruvate contacts are provided by Gly-93 and Arg-121. Positions 168, 169, 170, 199, 320, and 347 each coordinate 3-phosphoshikimate. Gln-170 lines the phosphoenolpyruvate pocket. Asp-320 (proton acceptor) is an active-site residue. Arg-351, Arg-395, and Lys-420 together coordinate phosphoenolpyruvate.

Belongs to the EPSP synthase family. In terms of assembly, monomer.

The protein resides in the cytoplasm. The enzyme catalyses 3-phosphoshikimate + phosphoenolpyruvate = 5-O-(1-carboxyvinyl)-3-phosphoshikimate + phosphate. It functions in the pathway metabolic intermediate biosynthesis; chorismate biosynthesis; chorismate from D-erythrose 4-phosphate and phosphoenolpyruvate: step 6/7. Its function is as follows. Catalyzes the transfer of the enolpyruvyl moiety of phosphoenolpyruvate (PEP) to the 5-hydroxyl of shikimate-3-phosphate (S3P) to produce enolpyruvyl shikimate-3-phosphate and inorganic phosphate. This Cupriavidus taiwanensis (strain DSM 17343 / BCRC 17206 / CCUG 44338 / CIP 107171 / LMG 19424 / R1) (Ralstonia taiwanensis (strain LMG 19424)) protein is 3-phosphoshikimate 1-carboxyvinyltransferase.